Here is a 280-residue protein sequence, read N- to C-terminus: uncharacterized protein (280 aa).

Residue Y54 is the Proton donor of the active site. H116 serves as a coordination point for substrate. 194–246 (SPLMQGQLLDHPVLADIAQTYNKSVAQIILRWDLQHGIITIPKSTKEHRIKEN) lines the NADP(+) pocket.

Belongs to the aldo/keto reductase family.

This is an uncharacterized protein from Bacillus subtilis (strain 168).